The sequence spans 254 residues: Fluoride-specific ion channel FluC 1 (254 aa).

The next 3 membrane-spanning stretches (helical) occupy residues L19–Y39, I51–V71, and A80–L100. Na(+) contacts are provided by G58 and S61.

Belongs to the fluoride channel Fluc/FEX (TC 1.A.43) family.

It is found in the cell inner membrane. The enzyme catalyses fluoride(in) = fluoride(out). Na(+) is not transported, but it plays an essential structural role and its presence is essential for fluoride channel function. Functionally, fluoride-specific ion channel. Important for reducing fluoride concentration in the cell, thus reducing its toxicity. In Brucella suis biovar 1 (strain 1330), this protein is Fluoride-specific ion channel FluC 1.